Consider the following 65-residue polypeptide: Large ribosomal subunit protein bL35 (65 aa).

The segment at 1–65 (MQKIKTNRSA…KELKRLLPGM (65 aa)) is disordered. 2 stretches are compositionally biased toward basic residues: residues 10–19 (AAKRFKRTKS) and 33–47 (LTKK…LRKS). Residues 54–65 (NNKELKRLLPGM) are compositionally biased toward basic and acidic residues.

It belongs to the bacterial ribosomal protein bL35 family.

This Desulfosudis oleivorans (strain DSM 6200 / JCM 39069 / Hxd3) (Desulfococcus oleovorans) protein is Large ribosomal subunit protein bL35.